A 186-amino-acid chain; its full sequence is Elongation factor P (186 aa).

It belongs to the elongation factor P family.

The protein localises to the cytoplasm. It functions in the pathway protein biosynthesis; polypeptide chain elongation. In terms of biological role, involved in peptide bond synthesis. Stimulates efficient translation and peptide-bond synthesis on native or reconstituted 70S ribosomes in vitro. Probably functions indirectly by altering the affinity of the ribosome for aminoacyl-tRNA, thus increasing their reactivity as acceptors for peptidyl transferase. The chain is Elongation factor P from Synechococcus sp. (strain CC9902).